An 88-amino-acid chain; its full sequence is UPF0250 protein swp_3927 (88 aa).

This sequence belongs to the UPF0250 family.

This chain is UPF0250 protein swp_3927, found in Shewanella piezotolerans (strain WP3 / JCM 13877).